An 88-amino-acid chain; its full sequence is Putative membrane protein insertion efficiency factor (88 aa).

Positions 68-88 are disordered; sequence VPPPNSDTRARGEADARSHRL. The span at 75-88 shows a compositional bias: basic and acidic residues; sequence TRARGEADARSHRL.

The protein belongs to the UPF0161 family.

The protein localises to the cell inner membrane. Functionally, could be involved in insertion of integral membrane proteins into the membrane. The protein is Putative membrane protein insertion efficiency factor of Burkholderia ambifaria (strain MC40-6).